The sequence spans 512 residues: Immunoglobulin delta heavy chain (512 aa).

Ig-like domains follow at residues 1 to 97 and 135 to 227; these read RLQL…MYYC and PDVF…KEIF. A variable (V) domain, involved in antigen recognition region spans residues 1-129; that stretch reads RLQLQESGPG…GQGTTVHVSS (129 aa). 2 cysteine pairs are disulfide-bonded: cysteine 22–cysteine 97 and cysteine 157–cysteine 213. The constant (C) domain stretch occupies residues 130 to 512; it reads APTKAPDVFP…VSYVTDHGPM (383 aa). The interval 225-296 is disordered; that stretch reads EIFRWPESPK…TPECPSHTQP (72 aa). The segment covering 235–247 has biased composition (polar residues); it reads AQASSVPTAQPQA. O-linked (GalNAc...) serine glycosylation is present at serine 238. O-linked (GalNAc...) threonine glycans are attached at residues threonine 255, threonine 256, threonine 260, and threonine 261. Positions 267 to 287 are enriched in basic and acidic residues; it reads GGEEKKKEKEKEEQEERETKT. Ig-like domains are found at residues 304 to 392 and 396 to 502; these read PAVQ…RLMA and PAAQ…RSLE. 2 cysteine pairs are disulfide-bonded: cysteine 319-cysteine 378 and cysteine 423-cysteine 484. 3 N-linked (GlcNAc...) asparagine glycosylation sites follow: asparagine 354, asparagine 445, and asparagine 496.

Immunoglobulins are composed of two identical heavy chains and two identical light chains; disulfide-linked. An IgD molecule contains thus a delta heavy chain combined with either a kappa or a lambda light chains. Kappa light chains are found predominantly on the membrane IgD (mIgD) form and lambda on the secreted IgD (sIgD) form, this fact is poorly understood. Membrane-bound IgD molecules are non-covalently associated with a heterodimer of CD79A and CD79B.

It is found in the secreted. It localises to the cell membrane. Immunoglobulins, also known as antibodies, are membrane-bound or secreted glycoproteins produced by B lymphocytes. In the recognition phase of humoral immunity, the membrane-bound immunoglobulins serve as receptors which, upon binding of a specific antigen, trigger the clonal expansion and differentiation of B lymphocytes into immunoglobulins-secreting plasma cells. Secreted immunoglobulins mediate the effector phase of humoral immunity, which results in the elimination of bound antigens. The antigen binding site is formed by the variable domain of one heavy chain, together with that of its associated light chain. Thus, each immunoglobulin has two antigen binding sites with remarkable affinity for a particular antigen. The variable domains are assembled by a process called V-(D)-J rearrangement and can then be subjected to somatic hypermutations which, after exposure to antigen and selection, allow affinity maturation for a particular antigen. IgD is the major antigen receptor isotype on the surface of most peripheral B cells, where it is coexpressed with IgM. The membrane-bound IgD (mIgD) induces the phosphorylation of CD79A and CD79B by the Src family of protein tyrosine kinases. Soluble IgD (sIgD) concentration in serum is below those of IgG, IgA, and IgM but much higher than that of IgE. IgM and IgD molecules present on B cells have identical V regions and antigen-binding sites. After the antigen binds to the B cell receptor, the secreted form sIgD is shut off. IgD is a potent inducer of TNF, IL1B, and IL1RN. IgD also induces release of IL6, IL10, and LIF from peripheral blood mononuclear cells. Monocytes seem to be the main producers of cytokines in vitro in the presence of IgD. The sequence is that of Immunoglobulin delta heavy chain from Homo sapiens (Human).